A 350-amino-acid chain; its full sequence is Anthranilate phosphoribosyltransferase (350 aa).

5-phospho-alpha-D-ribose 1-diphosphate-binding positions include Gly-82, 85–86 (GD), Ser-90, 92–95 (NVST), 110–118 (KHGNRAVTG), and Gly-122. An anthranilate-binding site is contributed by Gly-82. Ser-94 is a binding site for Mg(2+). Asn-113 lines the anthranilate pocket. An anthranilate-binding site is contributed by Arg-168. Residues Asp-232 and Glu-233 each coordinate Mg(2+).

Belongs to the anthranilate phosphoribosyltransferase family. As to quaternary structure, homodimer. It depends on Mg(2+) as a cofactor.

The catalysed reaction is N-(5-phospho-beta-D-ribosyl)anthranilate + diphosphate = 5-phospho-alpha-D-ribose 1-diphosphate + anthranilate. The protein operates within amino-acid biosynthesis; L-tryptophan biosynthesis; L-tryptophan from chorismate: step 2/5. In terms of biological role, catalyzes the transfer of the phosphoribosyl group of 5-phosphorylribose-1-pyrophosphate (PRPP) to anthranilate to yield N-(5'-phosphoribosyl)-anthranilate (PRA). The protein is Anthranilate phosphoribosyltransferase of Methanothermobacter marburgensis (strain ATCC BAA-927 / DSM 2133 / JCM 14651 / NBRC 100331 / OCM 82 / Marburg) (Methanobacterium thermoautotrophicum).